The following is a 317-amino-acid chain: Ribosomal RNA small subunit methyltransferase H (317 aa).

S-adenosyl-L-methionine is bound by residues 32–34 (GGH), Asp51, Phe78, Asp99, and Gln106.

Belongs to the methyltransferase superfamily. RsmH family.

Its subcellular location is the cytoplasm. It carries out the reaction cytidine(1402) in 16S rRNA + S-adenosyl-L-methionine = N(4)-methylcytidine(1402) in 16S rRNA + S-adenosyl-L-homocysteine + H(+). Its function is as follows. Specifically methylates the N4 position of cytidine in position 1402 (C1402) of 16S rRNA. This Helicobacter hepaticus (strain ATCC 51449 / 3B1) protein is Ribosomal RNA small subunit methyltransferase H.